The chain runs to 334 residues: Protein-methionine-sulfoxide reductase catalytic subunit MsrP (334 aa).

The segment at residues 1–44 (MKKNQFLKESDVTAESVFFMTRRQVLKALGISAAALSLPHAAHA) is a signal peptide (tat-type signal). Residues asparagine 88, 91-92 (YE), cysteine 146, threonine 181, asparagine 233, arginine 238, and 249-251 (GIK) each bind Mo-molybdopterin.

The protein belongs to the MsrP family. Heterodimer of a catalytic subunit (MsrP) and a heme-binding subunit (MsrQ). The cofactor is Mo-molybdopterin. Post-translationally, predicted to be exported by the Tat system. The position of the signal peptide cleavage has not been experimentally proven.

It is found in the periplasm. The catalysed reaction is L-methionyl-[protein] + a quinone + H2O = L-methionyl-(S)-S-oxide-[protein] + a quinol. The enzyme catalyses L-methionyl-[protein] + a quinone + H2O = L-methionyl-(R)-S-oxide-[protein] + a quinol. In terms of biological role, part of the MsrPQ system that repairs oxidized periplasmic proteins containing methionine sulfoxide residues (Met-O), using respiratory chain electrons. Thus protects these proteins from oxidative-stress damage caused by reactive species of oxygen and chlorine generated by the host defense mechanisms. MsrPQ is essential for the maintenance of envelope integrity under bleach stress, rescuing a wide series of structurally unrelated periplasmic proteins from methionine oxidation, including the primary periplasmic chaperone SurA and the lipoprotein Pal. The catalytic subunit MsrP is non-stereospecific, being able to reduce both (R-) and (S-) diastereoisomers of methionine sulfoxide. This Escherichia coli (strain 55989 / EAEC) protein is Protein-methionine-sulfoxide reductase catalytic subunit MsrP.